Here is an 881-residue protein sequence, read N- to C-terminus: MMQQYIEIKAAHADCLLFYRMGDFYELFFDDAEVASRALGITLTKRGKHRGEDIPMCGVPVHAADDYLQKLIALGHRVAVCEQMEDPAEAKKRGYKAVMRRDVVRLVTPGTITEEKLLDPSEANYLMALGRVKGSEELALAWIDISTGIFRVASTAPDRLLADISRIDPRELIVAEPVYHDAELRPVFDMLGRVVVPQPPVFFDSASAAMRLSRFYGVATLDGFGRFSRAELSAIAGAVAYVEKTQKAERPPLAAPERDEEGKSLFIDPSTRANLELARTLSSSREGSLLKAIDRTVTGAGSRLLAERLMSPLTDPQVIAERLDSVSFFLDEPGLRDRLRAFLKGVPDISRALSRLALNRGGPRDLGALSAGLEAAAAAADLLRGKEAPSEISAALSTLLSLPAALVSHLDRALADDLPLLKRDGGFVRGGYDAELDEMRALRDQSRRVIAGMERDLIEETGIRSLKIRHNNILGYYIEVRANNAGALNGTDEAKARFIHRQTMANAMRFTTTELADLETRIANAADRALAIELAVFERLVGEVVAASEPLRAAAQALAVLDVSAALACLAEGEDYCRPVVDGSLDFHIEGGRHPVVEQALRKQLGEPFVANDCDLSPAEGEKAGAIWLLTGPNMGGKSTFLRQNALIAVLAQMGSFVPARSARIGVVDRLFSRVGASDDLARGRSTFMVEMVETAAILNQAGERSLVILDEIGRGTATFDGLSIAWAAVEYLHEKNRCRALFATHFHEMTALTEKLSRLVNVTMRVKEFEGEVIFLHEVARGAADRSYGIQVARLAGLPQTVVERARDVLHRLEEGETGTKAARIVDDLPLFSAAMRQEPPKSKAPDHLREELTALNPDDMTPREALEVLYKLKRLVIEG.

632-639 (GPNMGGKS) lines the ATP pocket.

Belongs to the DNA mismatch repair MutS family.

Functionally, this protein is involved in the repair of mismatches in DNA. It is possible that it carries out the mismatch recognition step. This protein has a weak ATPase activity. This chain is DNA mismatch repair protein MutS, found in Chelativorans sp. (strain BNC1).